The following is a 140-amino-acid chain: Large ribosomal subunit protein uL14 (140 aa).

Belongs to the universal ribosomal protein uL14 family. In terms of assembly, component of the large ribosomal subunit.

It localises to the cytoplasm. Its function is as follows. Component of the large ribosomal subunit. The ribosome is a large ribonucleoprotein complex responsible for the synthesis of proteins in the cell. This is Large ribosomal subunit protein uL14 (rpl23) from Ictalurus punctatus (Channel catfish).